A 359-amino-acid chain; its full sequence is Ornithine carbamoyltransferase, mitochondrial (359 aa).

A mitochondrion-targeting transit peptide spans 1 to 24 (MASLRSVLKSQSLRHTVRSYSSQT). Residues 87–90 (STRT), arginine 138, histidine 165, and glutamine 168 contribute to the carbamoyl phosphate site. L-ornithine-binding residues include asparagine 205, aspartate 271, serine 275, and methionine 276. The Proton acceptor role is filled by cysteine 313. Residues 313 to 314 (CL) and arginine 340 contribute to the carbamoyl phosphate site.

Belongs to the aspartate/ornithine carbamoyltransferase superfamily. OTCase family. Homotrimer.

Its subcellular location is the mitochondrion matrix. It carries out the reaction carbamoyl phosphate + L-ornithine = L-citrulline + phosphate + H(+). Its pathway is amino-acid biosynthesis; L-arginine biosynthesis; L-arginine from L-ornithine and carbamoyl phosphate: step 1/3. This Emericella nidulans (strain FGSC A4 / ATCC 38163 / CBS 112.46 / NRRL 194 / M139) (Aspergillus nidulans) protein is Ornithine carbamoyltransferase, mitochondrial (argB).